A 3948-amino-acid chain; its full sequence is Equisetin synthetase eqxS (3948 aa).

The region spanning 4-438 is the Ketosynthase family 3 (KS3) domain; it reads SEPIAVIGSA…GTNAHAIIEA (435 aa). Active-site for beta-ketoacyl synthase activity residues include Cys-177, His-316, and His-358. The segment at 543-847 is malonyl-CoA:ACP transacylase (MAT) domain; the sequence is IFTGQGTQWP…DTIEAISEGR (305 aa). The segment at 931–1066 is N-terminal hotdog fold; it reads HPLLGRRCHD…AQIKASLGAP (136 aa). Positions 931–1233 are dehydratase (DH) domain; it reads HPLLGRRCHD…MELVPFSPAT (303 aa). Residues 931 to 1235 enclose the PKS/mFAS DH domain; that stretch reads HPLLGRRCHD…LVPFSPATPA (305 aa). The active-site Proton acceptor; for dehydratase activity is the His-964. Residues 1081-1235 are C-terminal hotdog fold; it reads LRPVSVDRFY…LVPFSPATPA (155 aa). Asp-1141 functions as the Proton donor; for dehydratase activity in the catalytic mechanism. Residues 1376–1574 are methyltransferase (MT) domain; sequence MLQDVYEQGF…GIDTTTPPVH (199 aa). The segment at 2105-2277 is ketoreductase (KR) domain; that stretch reads TFLLVGLTGE…VAASSIDISS (173 aa). One can recognise a Carrier 1 domain in the interval 2389 to 2464; it reads AIIKESFIVR…DLVDECLDLL (76 aa). Residue Ser-2424 is modified to O-(pantetheine 4'-phosphoryl)serine. The interval 2480–2553 is disordered; sequence QAAKPTTVIP…NSTDILAPPR (74 aa). Polar residues-rich tracts occupy residues 2487 to 2505 and 2513 to 2528; these read VIPQ…QGTS and GSDS…LTSW. Basic and acidic residues predominate over residues 2529–2541; it reads DRQDSSPPDKSDD. Positions 2564 to 2991 are condensation (C) domain; the sequence is SYGQAGFWFL…IRGSDKTVDA (428 aa). The tract at residues 3026-3424 is adenylation (A) (KR) domain; that stretch reads QVIQDNPDNI…DGLLFCDGRL (399 aa). Residues 3540-3617 enclose the Carrier 2 domain; sequence EILTPSEQRL…AMAGVLEDCG (78 aa). At Ser-3577 the chain carries O-(pantetheine 4'-phosphoryl)serine. The tract at residues 3653 to 3870 is reductase (RED) domain; the sequence is LTGSSGYLGR…MPVNEVVEAI (218 aa).

The protein in the C-terminal section; belongs to the NRP synthetase family.

It carries out the reaction L-serine + 7 malonyl-CoA + acetyl-CoA + 2 S-adenosyl-L-methionine + ATP + 8 NADPH + 11 H(+) = (5S)-3-[(2E,6R,8E,10E,12E)-2,6-dimethyltetradeca-2,8,10,12-tetraenoyl]-5-(hydroxymethyl)pyrrolidine-2,4-dione + AMP + 2 S-adenosyl-L-homocysteine + 7 CO2 + diphosphate + 8 NADP(+) + 8 CoA + 6 H2O. Its pathway is mycotoxin biosynthesis. Functionally, hybrid PKS-NRPS synthetase; part of the gene cluster that mediates the biosynthesis of equisetin, a trans-fused decalin-containing tetramic acid with antimicrobial activity. The PKS module of eqxS together with the enoylreductase eqxC catalyze the formation of the polyketide unit which is then conjugated to L-serine by the condensation domain of the eqxS NRPS module. Activity of the Dieckmann cyclase domain (RED) results in release of the Dieckmann product intermediate. Diels-Alderase eqx3 is involved in endo-selective Diels-Alder cycloaddition to form the decalin ring, leading to the production of N-desmethylequisetin also called trichosetin. Subsequent N-methylation is carried out by eqxD to give equisetin. This is Equisetin synthetase eqxS from Fusarium heterosporum.